A 113-amino-acid chain; its full sequence is Large ribosomal subunit protein P2 (113 aa).

The interval 66–113 (PVGGGGAVAAADAAPAAAAGGDKKEAKKEEKKEESESEDDDMGFALFE) is disordered. The span at 73–85 (VAAADAAPAAAAG) shows a compositional bias: low complexity. Over residues 86 to 99 (GDKKEAKKEEKKEE) the composition is skewed to basic and acidic residues. 2 positions are modified to phosphoserine: Ser100 and Ser102.

It belongs to the eukaryotic ribosomal protein P1/P2 family. P1 and P2 exist as dimers at the large ribosomal subunit.

In terms of biological role, plays an important role in the elongation step of protein synthesis. The protein is Large ribosomal subunit protein P2 (RpLP2) of Drosophila melanogaster (Fruit fly).